A 357-amino-acid chain; its full sequence is Glucose-6-phosphatase catalytic subunit 1 (357 aa).

Topologically, residues 1-28 (MEEGMNILHDFGIQSTRYLQVNYQDSQD) are lumenal. Residues 29–49 (WFILVSVIADLRNAFYVLFPI) traverse the membrane as a helical segment. Residues 50–60 (WFHLKETVGIN) are Cytoplasmic-facing. The helical transmembrane segment at 61-81 (LLWVAVVGDWFNLVFKWILFG) threads the bilayer. The Lumenal segment spans residues 82 to 117 (QRPYWWVLDTDYYSNSSVPIIKQFPVTCETGPGSPS). A substrate-binding site is contributed by Arg83. Residue Asn96 is glycosylated (N-linked (GlcNAc...) asparagine). Residues 118–138 (GHAMGAAGVYYVMVTSTLAIF) form a helical membrane-spanning segment. His119 (proton donor) is an active-site residue. At 139-147 (RGKKKPTYG) the chain is on the cytoplasmic side. The helical transmembrane segment at 148 to 168 (FRCLNVILWLGFWAVQLNVCL) threads the bilayer. The Lumenal segment spans residues 169 to 179 (SRIYLAAHFPH). Arg170 contacts substrate. His176 (nucleophile) is an active-site residue. Residues 180 to 202 (QVVAGVLSGIAVAETFSHIRGIY) traverse the membrane as a helical segment. Over 203-211 (NASLRKYCL) the chain is Cytoplasmic. Residues 212 to 232 (ITIFLFGFALGFYLLLKGLGV) form a helical membrane-spanning segment. Over 233 to 254 (DLLWTLEKAKRWCERPEWVHLD) the chain is Lumenal. A helical membrane pass occupies residues 255–275 (TTPFASLFKNLGTLLGLGLAL). The Cytoplasmic segment spans residues 276–291 (NSSMYRKSCKGELSKL). The helical transmembrane segment at 292–312 (LPFRFACIVASLVLLHLFDSL) threads the bilayer. Residues 313–320 (KPPSQVEL) are Lumenal-facing. The helical transmembrane segment at 321–341 (IFYILSFCKSATVPFASVSLI) threads the bilayer. Over 342 to 357 (PYCLARILGQTHKKSL) the chain is Cytoplasmic. A Prevents secretion from ER motif is present at residues 354 to 357 (KKSL).

This sequence belongs to the glucose-6-phosphatase family. In terms of tissue distribution, liver and kidney.

It localises to the endoplasmic reticulum membrane. It carries out the reaction D-glucose 6-phosphate + H2O = D-glucose + phosphate. The protein operates within carbohydrate biosynthesis; gluconeogenesis. Functionally, hydrolyzes glucose-6-phosphate to glucose in the endoplasmic reticulum. Forms with the glucose-6-phosphate transporter (SLC37A4/G6PT) the complex responsible for glucose production in the terminal step of glycogenolysis and gluconeogenesis. Hence, it is the key enzyme in homeostatic regulation of blood glucose levels. In Mus musculus (Mouse), this protein is Glucose-6-phosphatase catalytic subunit 1 (G6pc1).